Consider the following 653-residue polypeptide: Threonine--tRNA ligase (653 aa).

The TGS domain occupies 1-61 (MIKITFPDGN…NEDAEVKLFK (61 aa)). Residues 243-542 (DHRKIGKELE…LIEHTAGKFP (300 aa)) form a catalytic region. 3 residues coordinate Zn(2+): Cys-338, His-389, and His-519.

Belongs to the class-II aminoacyl-tRNA synthetase family. Homodimer. It depends on Zn(2+) as a cofactor.

It is found in the cytoplasm. The catalysed reaction is tRNA(Thr) + L-threonine + ATP = L-threonyl-tRNA(Thr) + AMP + diphosphate + H(+). In terms of biological role, catalyzes the attachment of threonine to tRNA(Thr) in a two-step reaction: L-threonine is first activated by ATP to form Thr-AMP and then transferred to the acceptor end of tRNA(Thr). Also edits incorrectly charged L-seryl-tRNA(Thr). The chain is Threonine--tRNA ligase from Porphyromonas gingivalis (strain ATCC 33277 / DSM 20709 / CIP 103683 / JCM 12257 / NCTC 11834 / 2561).